Reading from the N-terminus, the 591-residue chain is MGKLLFGKLVFKKSLFLLSGMSSLAVFLTACGATKIFDSSVQLLVSDNFSTLADKSFSQMSYEGIRSFFKKSKGVDLPEADSSQLQEGNGLWKRPGFTLSDRIATFNNIKNDGSDVIVATGFNQQESLQAITSDDIRFQSDKESLAKTGFIFVDGAIEKEFNKRNGVPQFKSTPTNISSVAFRSDDGSFLTGVATAVYLNLNQEYFLDKSGWSTNSSNNNELTVSGFVGIALPSTLSFLNGFRLGIAYFNEVIYKHLSDAQDSSAQVTTSKQTVLKQLQVANGEKRIKKIKWISPKQGSDGETINIQDHQSGSFSDTEPRAITIANNLIDKGVNAIIPIAGPQTNLVVTQIARRQAHTAVIGVDSAQELLDINIDAPNKDKLKMGNKKIIPFSSIKALDVAVESILSTLEKGSSQNGYQGFGYNNIGTVKNNSVGVSEAGYEFLIDPVFWKNTSSMQAMSLSASLKANAASSSDNKKKLSEVATKKNENGSTKNGSNDIIDKYAKLLTKSSSSTSMRNGSSDSNQQNFKTTDNDGDWTIVGDELGKYKSSELPIFTGSSSYPTFQTEAQNVLDGGANVASTQGFKWSFKQI.

The signal sequence occupies residues 1–30; it reads MGKLLFGKLVFKKSLFLLSGMSSLAVFLTA. Cys31 carries N-palmitoyl cysteine lipidation. Cys31 is lipidated: S-diacylglycerol cysteine. A compositionally biased stretch (basic and acidic residues) spans 476 to 488; that stretch reads KKKLSEVATKKNE. 2 disordered regions span residues 476–497 and 510–535; these read KKKL…NGSN and SSSS…DNDG. A compositionally biased stretch (low complexity) spans 510-523; it reads SSSSTSMRNGSSDS.

This sequence to T.pallidum TmpC.

Its subcellular location is the cell membrane. This is an uncharacterized protein from Mycoplasma genitalium (strain ATCC 33530 / DSM 19775 / NCTC 10195 / G37) (Mycoplasmoides genitalium).